A 200-amino-acid polypeptide reads, in one-letter code: Holliday junction branch migration complex subunit RuvA (200 aa).

Residues 1–63 (MIASVRGEVL…EDSMTLYGFP (63 aa)) form a domain I region. The domain II stretch occupies residues 64–142 (DSESKELFGL…AVGSTSGAVP (79 aa)). The interval 142-146 (PLGAG) is flexible linker. Residues 147-200 (GGGSVRDQIVEALVGLGFPAKQAEQATDSVLAEAPESTTSSALRSALSLLGKTR) are domain III.

The protein belongs to the RuvA family. Homotetramer. Forms an RuvA(8)-RuvB(12)-Holliday junction (HJ) complex. HJ DNA is sandwiched between 2 RuvA tetramers; dsDNA enters through RuvA and exits via RuvB. An RuvB hexamer assembles on each DNA strand where it exits the tetramer. Each RuvB hexamer is contacted by two RuvA subunits (via domain III) on 2 adjacent RuvB subunits; this complex drives branch migration. In the full resolvosome a probable DNA-RuvA(4)-RuvB(12)-RuvC(2) complex forms which resolves the HJ.

The protein localises to the cytoplasm. Functionally, the RuvA-RuvB-RuvC complex processes Holliday junction (HJ) DNA during genetic recombination and DNA repair, while the RuvA-RuvB complex plays an important role in the rescue of blocked DNA replication forks via replication fork reversal (RFR). RuvA specifically binds to HJ cruciform DNA, conferring on it an open structure. The RuvB hexamer acts as an ATP-dependent pump, pulling dsDNA into and through the RuvAB complex. HJ branch migration allows RuvC to scan DNA until it finds its consensus sequence, where it cleaves and resolves the cruciform DNA. The protein is Holliday junction branch migration complex subunit RuvA of Rhodococcus opacus (strain B4).